Here is a 104-residue protein sequence, read N- to C-terminus: MASVSSIFGCGVSMAPNSSLRNKAIRTERRSACGGLLIECSSRPQKKSTAHHMKTRPRKSRLSDRNRKPTVYAPLPPLPPDFTIVIPADASTVDFTPPPPTPSD.

A chloroplast-targeting transit peptide spans 1-39 (MASVSSIFGCGVSMAPNSSLRNKAIRTERRSACGGLLIE). Residues 42–76 (SRPQKKSTAHHMKTRPRKSRLSDRNRKPTVYAPLP) form a disordered region. A compositionally biased stretch (basic residues) spans 44–60 (PQKKSTAHHMKTRPRKS).

The protein belongs to the chloroplast-specific ribosomal protein cL38 family. Part of the 50S ribosomal subunit.

The protein resides in the plastid. Its subcellular location is the chloroplast. This Pisum sativum (Garden pea) protein is Large ribosomal subunit protein cL38 (PSRP6).